A 301-amino-acid polypeptide reads, in one-letter code: uncharacterized protein (301 aa).

This sequence belongs to the asfivirus E301R family. Interacts with host IRF3.

Plays a role in the inhibition of host innate immune system by acting as a negatively regulator of type I interferon production. Mechanistically, interacts with and prevents host IRF3 nuclear localization to inhibit its transcriptional activity. This is an uncharacterized protein from Ornithodoros (relapsing fever ticks).